The chain runs to 359 residues: Peptide chain release factor 1 (359 aa).

N5-methylglutamine is present on Gln-235. The segment at 283 to 309 (QKAESERSQARRSQVGSGDRSERIRTY) is disordered.

Belongs to the prokaryotic/mitochondrial release factor family. In terms of processing, methylated by PrmC. Methylation increases the termination efficiency of RF1.

The protein resides in the cytoplasm. Its function is as follows. Peptide chain release factor 1 directs the termination of translation in response to the peptide chain termination codons UAG and UAA. This chain is Peptide chain release factor 1, found in Brucella melitensis biotype 2 (strain ATCC 23457).